A 2541-amino-acid polypeptide reads, in one-letter code: Highly reducing polyketide synthase otaA (2541 aa).

Positions 9-431 (SEPLAIIGLA…GTNAHVVLED (423 aa)) constitute a Ketosynthase family 3 (KS3) domain. Catalysis depends on for beta-ketoacyl synthase activity residues Cys182, His317, and His355. Positions 571-888 (FIFTGQGANW…GSLLKRYETD (318 aa)) constitute a Malonyl-CoA:ACP transacylase (MAT) domain. The segment at 957–1092 (HELLGVPVED…GSVRVETGPH (136 aa)) is N-terminal hotdog fold. Residues 957-1251 (HELLGVPVED…GLDLVQLPPS (295 aa)) are dehydratase (DH) domain. One can recognise a PKS/mFAS DH domain in the interval 957-1254 (HELLGVPVED…LVQLPPSEDA (298 aa)). Positions 1108-1254 (TESVDIAQMY…LVQLPPSEDA (147 aa)) are C-terminal hotdog fold. Residues Ile1420 and Glu1442 each contribute to the S-adenosyl-L-methionine site. The tract at residues 1433-1605 (HAQTGIKVLE…DQELRNAGLQ (173 aa)) is methyltransferase (CMeT) domain. One can recognise an Enoyl reductase (ER) domain in the interval 1838 to 2141 (HQPNGFHFVE…RQGNAGPWVL (304 aa)). The region spanning 2165–2344 (ASYLLIGGFG…PATSISLGSV (180 aa)) is the Ketoreductase (KR) domain. Residues 2453–2530 (DAVELVTRAI…QLAQQAAGGS (78 aa)) enclose the Carrier domain. Residue Ser2490 is modified to O-(pantetheine 4'-phosphoryl)serine.

Pantetheine 4'-phosphate is required as a cofactor.

The catalysed reaction is 4 malonyl-CoA + acetyl-CoA + 5 NADPH + 9 H(+) = 7-methylmellein + 3 CO2 + 5 NADP(+) + 5 CoA + 4 H2O. The protein operates within mycotoxin biosynthesis. Its function is as follows. Highly reducing polyketide synthase; part of the gene cluster that mediates the biosynthesis of ochratoxin A (OTA), a mycotoxin composed of a chlorinated type I polyketide dihydroisocoumarin moiety linked to L-phenylalanine, and demonstrated to have nephrotoxic, immunotoxic, genotoxic, neurotoxic, and teratogenic properties. OtaA catalyzes the condensation of one acetate and 4 malonate units to form the isocoumarin group. The pathway begins with the highly reducing polyketide synthase otaA that catalyzes the formation of the isocoumarin group during the initial stages of biosynthesis, starting from one acetate and 4 malonate units, to originate the characteristic pentaketide skeleton 7-methylmellein (7-MM) of the OTA molecule. The newly identified cyclase otaY might be involved in the polyketide cyclization reaction during the initial steps of the OTA biosynthesis. 7-MM is then oxidized into 7-carboxymellein (also called ochratoxin beta) by the cytochrome P450 monooxygenase otaC. The NRPS encoded by the otaB gene is involved in the linking of phenylalanine to the dihydroisocoumarin ring. The reaction catalyzed by NRPS results in the production of ochratoxin B (OTB), which is the non-chlorinated analog of OTA and which subsequently serves as the substrate of the halogenase otaD for chlorination activity to form the final molecular structure of OTA, containing a chlorine atom in the C-5 position of the molecule. In Aspergillus carbonarius (strain ITEM 5010), this protein is Highly reducing polyketide synthase otaA.